Here is a 284-residue protein sequence, read N- to C-terminus: 2-dehydro-3-deoxyphosphooctonate aldolase (284 aa).

The protein belongs to the KdsA family.

The protein localises to the cytoplasm. The catalysed reaction is D-arabinose 5-phosphate + phosphoenolpyruvate + H2O = 3-deoxy-alpha-D-manno-2-octulosonate-8-phosphate + phosphate. It functions in the pathway carbohydrate biosynthesis; 3-deoxy-D-manno-octulosonate biosynthesis; 3-deoxy-D-manno-octulosonate from D-ribulose 5-phosphate: step 2/3. Its pathway is bacterial outer membrane biogenesis; lipopolysaccharide biosynthesis. The chain is 2-dehydro-3-deoxyphosphooctonate aldolase from Burkholderia vietnamiensis (strain G4 / LMG 22486) (Burkholderia cepacia (strain R1808)).